Here is a 126-residue protein sequence, read N- to C-terminus: NADH-quinone oxidoreductase subunit A (126 aa).

Transmembrane regions (helical) follow at residues 16-36, 73-93, and 95-115; these read ILVL…AAAI, ILFI…VAFG, and MSMT…VGFA.

Belongs to the complex I subunit 3 family. As to quaternary structure, NDH-1 is composed of 14 different subunits. Subunits NuoA, H, J, K, L, M, N constitute the membrane sector of the complex.

It localises to the cell inner membrane. The enzyme catalyses a quinone + NADH + 5 H(+)(in) = a quinol + NAD(+) + 4 H(+)(out). Functionally, NDH-1 shuttles electrons from NADH, via FMN and iron-sulfur (Fe-S) centers, to quinones in the respiratory chain. The immediate electron acceptor for the enzyme in this species is believed to be ubiquinone. Couples the redox reaction to proton translocation (for every two electrons transferred, four hydrogen ions are translocated across the cytoplasmic membrane), and thus conserves the redox energy in a proton gradient. The polypeptide is NADH-quinone oxidoreductase subunit A (Rhodobacter capsulatus (Rhodopseudomonas capsulata)).